A 286-amino-acid polypeptide reads, in one-letter code: Putative sensory transducer protein YfmS (286 aa).

The region spanning Ile-68–Glu-286 is the Methyl-accepting transducer domain.

This sequence belongs to the methyl-accepting chemotaxis (MCP) protein family.

Chemotactic-signal transducers respond to changes in the concentration of attractants and repellents in the environment, transduce a signal from the outside to the inside of the cell, and facilitate sensory adaptation through the variation of the level of methylation. Attractants increase the level of methylation while repellents decrease the level of methylation. This Bacillus subtilis (strain 168) protein is Putative sensory transducer protein YfmS (yfmS).